A 429-amino-acid chain; its full sequence is Enolase (429 aa).

Glutamine 163 is a binding site for (2R)-2-phosphoglycerate. Glutamate 205 (proton donor) is an active-site residue. Mg(2+)-binding residues include aspartate 242, glutamate 287, and aspartate 314. (2R)-2-phosphoglycerate is bound by residues lysine 339, arginine 368, serine 369, and lysine 390. Lysine 339 functions as the Proton acceptor in the catalytic mechanism.

It belongs to the enolase family. Mg(2+) is required as a cofactor.

The protein localises to the cytoplasm. It localises to the secreted. Its subcellular location is the cell surface. It carries out the reaction (2R)-2-phosphoglycerate = phosphoenolpyruvate + H2O. It functions in the pathway carbohydrate degradation; glycolysis; pyruvate from D-glyceraldehyde 3-phosphate: step 4/5. Functionally, catalyzes the reversible conversion of 2-phosphoglycerate (2-PG) into phosphoenolpyruvate (PEP). It is essential for the degradation of carbohydrates via glycolysis. This Cupriavidus pinatubonensis (strain JMP 134 / LMG 1197) (Cupriavidus necator (strain JMP 134)) protein is Enolase.